The chain runs to 203 residues: Histidine biosynthesis bifunctional protein HisIE (203 aa).

The interval methionine 1–phenylalanine 114 is phosphoribosyl-AMP cyclohydrolase. Residues leucine 115–glutamine 203 form a phosphoribosyl-ATP pyrophosphohydrolase region.

In the N-terminal section; belongs to the PRA-CH family. It in the C-terminal section; belongs to the PRA-PH family.

The protein localises to the cytoplasm. The enzyme catalyses 1-(5-phospho-beta-D-ribosyl)-ATP + H2O = 1-(5-phospho-beta-D-ribosyl)-5'-AMP + diphosphate + H(+). It catalyses the reaction 1-(5-phospho-beta-D-ribosyl)-5'-AMP + H2O = 1-(5-phospho-beta-D-ribosyl)-5-[(5-phospho-beta-D-ribosylamino)methylideneamino]imidazole-4-carboxamide. It participates in amino-acid biosynthesis; L-histidine biosynthesis; L-histidine from 5-phospho-alpha-D-ribose 1-diphosphate: step 2/9. It functions in the pathway amino-acid biosynthesis; L-histidine biosynthesis; L-histidine from 5-phospho-alpha-D-ribose 1-diphosphate: step 3/9. This chain is Histidine biosynthesis bifunctional protein HisIE (hisI), found in Shigella flexneri.